Here is a 134-residue protein sequence, read N- to C-terminus: Cytochrome b (134 aa).

The next 3 helical transmembrane spans lie at 33-53 (FGSLLGVCLAVQILTGLFLAM), 77-98 (WLLRYLHANGASMFFICLYLHV), and 113-133 (WNIGILLLFAVMATAFMGYVL). Residues H83 and H97 each contribute to the heme b site.

It belongs to the cytochrome b family. The cytochrome bc1 complex contains 11 subunits: 3 respiratory subunits (MT-CYB, CYC1 and UQCRFS1), 2 core proteins (UQCRC1 and UQCRC2) and 6 low-molecular weight proteins (UQCRH/QCR6, UQCRB/QCR7, UQCRQ/QCR8, UQCR10/QCR9, UQCR11/QCR10 and a cleavage product of UQCRFS1). This cytochrome bc1 complex then forms a dimer. It depends on heme b as a cofactor.

The protein localises to the mitochondrion inner membrane. Component of the ubiquinol-cytochrome c reductase complex (complex III or cytochrome b-c1 complex) that is part of the mitochondrial respiratory chain. The b-c1 complex mediates electron transfer from ubiquinol to cytochrome c. Contributes to the generation of a proton gradient across the mitochondrial membrane that is then used for ATP synthesis. This chain is Cytochrome b (MT-CYB), found in Chiroderma salvini (Salvin's big-eyed bat).